Consider the following 278-residue polypeptide: Nudix hydrolase 2 (278 aa).

Positions 110–242 constitute a Nudix hydrolase domain; the sequence is SHRVGIGAFV…ELLRYMTDIC (133 aa). The short motif at 147 to 168 is the Nudix box element; it reads GVVNEGEDIHDGSVREVKEETG. Residue Glu162 coordinates Mg(2+). Glu165 serves as the catalytic Proton acceptor. A Mg(2+)-binding site is contributed by Glu166.

Belongs to the Nudix hydrolase family. Mg(2+) serves as cofactor. Requires Mn(2+) as cofactor. Expressed in roots, stems and leaves.

The enzyme catalyses ADP-D-ribose + H2O = D-ribose 5-phosphate + AMP + 2 H(+). The catalysed reaction is NAD(+) + H2O = beta-nicotinamide D-ribonucleotide + AMP + 2 H(+). It catalyses the reaction NADH + H2O = reduced beta-nicotinamide D-ribonucleotide + AMP + 2 H(+). Its function is as follows. Probably mediates the hydrolysis of some nucleoside diphosphate derivatives. In vitro, it can use both NADH and ADP-ribose as substrates; however the relevance of such substrates in vivo is unclear. Confers tolerance to oxidative stress. This chain is Nudix hydrolase 2, found in Arabidopsis thaliana (Mouse-ear cress).